An 855-amino-acid polypeptide reads, in one-letter code: Suppressor of tumorigenicity 14 protein (855 aa).

Residues 1–20 are disordered; the sequence is MGSDRARKGGGGPKDFGAGL. Residues 1-55 are Cytoplasmic-facing; sequence MGSDRARKGGGGPKDFGAGLKYNSRHEKVNGLEEGVEFLPVNNVKKVEKHGPGRW. Residues 56–76 traverse the membrane as a helical; Signal-anchor for type II membrane protein segment; sequence VVLAAVLIGLLLVLLGIGFLV. Residues 77–855 lie on the Extracellular side of the membrane; the sequence is WHLQYRDVRV…RDWIKENTGV (779 aa). Residues 86–203 enclose the SEA domain; it reads VQKVFNGYMR…TSVVAFPTDS (118 aa). Asparagine 109 carries N-linked (GlcNAc...) asparagine glycosylation. Cysteine 214 and cysteine 244 form a disulfide bridge. CUB domains lie at 214–334 and 340–447; these read CSFG…FFQL and CGGR…YLSY. Residue asparagine 302 is glycosylated (N-linked (GlcNAc...) asparagine). Cystine bridges form between cysteine 340–cysteine 366, cysteine 397–cysteine 410, cysteine 453–cysteine 464, cysteine 459–cysteine 477, cysteine 471–cysteine 486, cysteine 488–cysteine 501, cysteine 496–cysteine 514, cysteine 508–cysteine 523, cysteine 525–cysteine 537, cysteine 532–cysteine 550, cysteine 544–cysteine 559, cysteine 567–cysteine 579, cysteine 574–cysteine 593, cysteine 587–cysteine 602, and cysteine 641–cysteine 657. LDL-receptor class A domains lie at 452-487, 487-524, 524-560, and 566-603; these read PCPG…LNCS, SCDA…QGCS, SCPA…ASCP, and TCTK…KDCD. Asparagine 485 carries N-linked (GlcNAc...) asparagine glycosylation. A Peptidase S1 domain is found at 615–854; the sequence is VVGGTDADEG…FRDWIKENTG (240 aa). Residues histidine 656 and aspartate 711 each act as charge relay system in the active site. Asparagine 772 is a glycosylation site (N-linked (GlcNAc...) asparagine). Intrachain disulfides connect cysteine 776/cysteine 790 and cysteine 801/cysteine 830. The Charge relay system role is filled by serine 805.

Belongs to the peptidase S1 family. Interacts with CDCP1. May interact with TMEFF1. Interacts with iripin-3, a serine protease inhibitor from Ixodes ricinus saliva. Interacts with iripin-1, a serine protease inhibitor from Ixodes ricinus saliva.

The protein localises to the membrane. The enzyme catalyses Cleaves various synthetic substrates with Arg or Lys at the P1 position and prefers small side-chain amino acids, such as Ala and Gly, at the P2 position.. Functionally, exhibits trypsin-like activity as defined by cleavage of synthetic substrates with Arg or Lys as the P1 site. Involved in the terminal differentiation of keratinocytes through prostasin (PRSS8) activation and filaggrin (FLG) processing. Proteolytically cleaves and therefore activates TMPRSS13. In Homo sapiens (Human), this protein is Suppressor of tumorigenicity 14 protein (ST14).